The sequence spans 172 residues: Type II secretion system protein H (172 aa).

The propeptide at 1-6 (MRASRG) is leader sequence. F7 is subject to N-methylphenylalanine. A helical membrane pass occupies residues 7–27 (FTLIELMVVMVIISVLIGLAV).

This sequence belongs to the GSP H family. Type II secretion is composed of four main components: the outer membrane complex, the inner membrane complex, the cytoplasmic secretion ATPase and the periplasm-spanning pseudopilus. Forms the tip of the type II pseudopilus by interacting with XcpV, XcpW and XcpX. Interacts with core component XcpT. Cleaved by prepilin peptidase. Post-translationally, methylated by prepilin peptidase at the amino group of the N-terminal phenylalanine once the leader sequence is cleaved by prepilin peptidase.

It is found in the cell inner membrane. In terms of biological role, component of the type II secretion system required for the energy-dependent secretion of extracellular factors such as proteases and toxins from the periplasm. Part of the pseudopilus tip complex that is critical for the recognition and binding of secretion substrates. Type II pseudopilus confers increased bacterial adhesive capabilities. This chain is Type II secretion system protein H (xcpU), found in Pseudomonas aeruginosa (strain ATCC 15692 / DSM 22644 / CIP 104116 / JCM 14847 / LMG 12228 / 1C / PRS 101 / PAO1).